Consider the following 375-residue polypeptide: Protein RecA (375 aa).

Residues 1-20 (MPAEMKSAASGSDPRSSGER) form a disordered region. 79–86 (GPESSGKT) contacts ATP.

The protein belongs to the RecA family.

It localises to the cytoplasm. In terms of biological role, can catalyze the hydrolysis of ATP in the presence of single-stranded DNA, the ATP-dependent uptake of single-stranded DNA by duplex DNA, and the ATP-dependent hybridization of homologous single-stranded DNAs. It interacts with LexA causing its activation and leading to its autocatalytic cleavage. This Parasynechococcus marenigrum (strain WH8102) protein is Protein RecA.